We begin with the raw amino-acid sequence, 42 residues long: Photosystem II reaction center protein J (42 aa).

A helical transmembrane segment spans residues 10 to 30 (IPLWLVGTVVGLLAIGLLALF).

Belongs to the PsbJ family. As to quaternary structure, PSII is composed of 1 copy each of membrane proteins PsbA, PsbB, PsbC, PsbD, PsbE, PsbF, PsbH, PsbI, PsbJ, PsbK, PsbL, PsbM, PsbT, PsbX, PsbY, PsbZ, Psb30/Ycf12, at least 3 peripheral proteins of the oxygen-evolving complex and a large number of cofactors. It forms dimeric complexes.

It localises to the plastid. The protein localises to the chloroplast thylakoid membrane. Functionally, one of the components of the core complex of photosystem II (PSII). PSII is a light-driven water:plastoquinone oxidoreductase that uses light energy to abstract electrons from H(2)O, generating O(2) and a proton gradient subsequently used for ATP formation. It consists of a core antenna complex that captures photons, and an electron transfer chain that converts photonic excitation into a charge separation. The chain is Photosystem II reaction center protein J from Mesostigma viride (Green alga).